Consider the following 760-residue polypeptide: 5-methyltetrahydropteroyltriglutamate--homocysteine methyltransferase (760 aa).

Residues 17–20 (RELK) and Lys118 each bind 5-methyltetrahydropteroyltri-L-glutamate. Residues 436–438 (IGS) and Glu489 contribute to the L-homocysteine site. Residues 436–438 (IGS) and Glu489 each bind L-methionine. Residues 520-521 (RC) and Trp566 contribute to the 5-methyltetrahydropteroyltri-L-glutamate site. Asp604 provides a ligand contact to L-homocysteine. Asp604 lines the L-methionine pocket. Glu610 contacts 5-methyltetrahydropteroyltri-L-glutamate. The Zn(2+) site is built by His646, Cys648, and Glu670. His699 serves as the catalytic Proton donor. Position 731 (Cys731) interacts with Zn(2+).

The protein belongs to the vitamin-B12 independent methionine synthase family. It depends on Zn(2+) as a cofactor.

It catalyses the reaction 5-methyltetrahydropteroyltri-L-glutamate + L-homocysteine = tetrahydropteroyltri-L-glutamate + L-methionine. The protein operates within amino-acid biosynthesis; L-methionine biosynthesis via de novo pathway; L-methionine from L-homocysteine (MetE route): step 1/1. Functionally, catalyzes the transfer of a methyl group from 5-methyltetrahydrofolate to homocysteine resulting in methionine formation. This chain is 5-methyltetrahydropteroyltriglutamate--homocysteine methyltransferase, found in Vibrio harveyi (Beneckea harveyi).